A 156-amino-acid chain; its full sequence is Transcriptional repressor NrdR (156 aa).

The segment at 3–34 (CPFCGNVDTQVKDSRPAEDHVAIRRRRFCPAC) is a zinc-finger region. One can recognise an ATP-cone domain in the interval 49-139 (LVVIKSNGKR…VYKNFQATGD (91 aa)).

The protein belongs to the NrdR family. Zn(2+) serves as cofactor.

Functionally, negatively regulates transcription of bacterial ribonucleotide reductase nrd genes and operons by binding to NrdR-boxes. This Jannaschia sp. (strain CCS1) protein is Transcriptional repressor NrdR.